Here is a 398-residue protein sequence, read N- to C-terminus: Fe-regulated protein 8 (398 aa).

Its function is as follows. Protein of unknown function; part of the gene cluster that mediates the biosynthesis of siderophore ferrichrome A which is contributing to organismal virulence. This is Fe-regulated protein 8 from Mycosarcoma maydis (Corn smut fungus).